An 87-amino-acid chain; its full sequence is MANTAQAKKRVRQNIKQRERNSGLRSRLRTAIKSVRKAIVAGDKNLAETVFRKSVSIIDSIASKGIIHKNKASRHKSRLSGAVKAMG.

Residues 1-26 (MANTAQAKKRVRQNIKQRERNSGLRS) form a disordered region.

Belongs to the bacterial ribosomal protein bS20 family.

Functionally, binds directly to 16S ribosomal RNA. In Nitrosomonas eutropha (strain DSM 101675 / C91 / Nm57), this protein is Small ribosomal subunit protein bS20.